Consider the following 343-residue polypeptide: UDP-3-O-acylglucosamine N-acyltransferase (343 aa).

The active-site Proton acceptor is the histidine 248.

The protein belongs to the transferase hexapeptide repeat family. LpxD subfamily. Homotrimer.

The enzyme catalyses a UDP-3-O-[(3R)-3-hydroxyacyl]-alpha-D-glucosamine + a (3R)-hydroxyacyl-[ACP] = a UDP-2-N,3-O-bis[(3R)-3-hydroxyacyl]-alpha-D-glucosamine + holo-[ACP] + H(+). The protein operates within bacterial outer membrane biogenesis; LPS lipid A biosynthesis. Its function is as follows. Catalyzes the N-acylation of UDP-3-O-acylglucosamine using 3-hydroxyacyl-ACP as the acyl donor. Is involved in the biosynthesis of lipid A, a phosphorylated glycolipid that anchors the lipopolysaccharide to the outer membrane of the cell. This is UDP-3-O-acylglucosamine N-acyltransferase from Microcystis aeruginosa (strain NIES-843 / IAM M-2473).